We begin with the raw amino-acid sequence, 236 residues long: Orotidine 5'-phosphate decarboxylase (236 aa).

Substrate contacts are provided by residues D14, K36, 63 to 72, T123, R184, Q193, G213, and R214; that span reads DLKFHDIPNT. K65 functions as the Proton donor in the catalytic mechanism.

Belongs to the OMP decarboxylase family. Type 1 subfamily. As to quaternary structure, homodimer.

It catalyses the reaction orotidine 5'-phosphate + H(+) = UMP + CO2. It participates in pyrimidine metabolism; UMP biosynthesis via de novo pathway; UMP from orotate: step 2/2. Catalyzes the decarboxylation of orotidine 5'-monophosphate (OMP) to uridine 5'-monophosphate (UMP). The sequence is that of Orotidine 5'-phosphate decarboxylase from Marinobacter nauticus (strain ATCC 700491 / DSM 11845 / VT8) (Marinobacter aquaeolei).